We begin with the raw amino-acid sequence, 1029 residues long: Putative guanine nucleotide-exchange factor SED4 (1029 aa).

The Cytoplasmic segment spans residues 1 to 344 (MVFDSEYDLG…AMGGSNLWKS (344 aa)). WD repeat units lie at residues 257-296 (KDYK…VIKL) and 300-339 (VHKD…MGGS). The chain crosses the membrane as a helical; Signal-anchor for type II membrane protein span at residues 345–365 (LLRFLFNVMKLAVVVIWAHLF). Topologically, residues 366–1029 (YKYDLHHKLY…TQHNVINDEL (664 aa)) are lumenal. N-linked (GlcNAc...) asparagine glycosylation occurs at N579. Residues 579–592 (NASTSISIEESTNS) are compositionally biased toward low complexity. Disordered stretches follow at residues 579–673 (NAST…NSIV), 710–732 (VVDE…VGSI), and 747–821 (EAVK…SQIS). The segment covering 593–603 (HSTFIESSSSL) has biased composition (polar residues). The N-linked (GlcNAc...) asparagine glycan is linked to N608. Residues 613 to 628 (SSREISSETSIIKEDM) show a composition bias toward basic and acidic residues. A compositionally biased stretch (polar residues) spans 633–642 (ENVSEQSATD). N-linked (GlcNAc...) asparagine glycosylation is found at N634 and N647. Over residues 643–654 (KVNKNQSIDKID) the composition is skewed to basic and acidic residues. Positions 655–672 (VSSSSSIPTSSEGSSNSI) are enriched in low complexity. Positions 712-722 (DENHSESKLPT) are enriched in basic and acidic residues. N714, N754, N774, N792, N806, N855, N865, N874, N884, and N966 each carry an N-linked (GlcNAc...) asparagine glycan. Polar residues-rich tracts occupy residues 750–762 (KTSS…SQVT) and 771–782 (RVSNQSLSTVST). Basic and acidic residues predominate over residues 783 to 799 (EHTEMKESSNLTEKKPE). Residues 800–812 (SNSPESNLSESSL) are compositionally biased toward low complexity. Low complexity predominate over residues 858–867 (LVDSQSSNSS). Disordered stretches follow at residues 858–886 (LVDS…QNET), 963–982 (TPEN…FMTE), and 1003–1029 (VAQQ…NDEL). Polar residues predominate over residues 868 to 886 (VKTVETNVSQDEQTSQNET). The short motif at 1026-1029 (NDEL) is the Prevents secretion from ER element.

This sequence belongs to the WD repeat SEC12 family.

It localises to the endoplasmic reticulum membrane. Its subcellular location is the golgi apparatus membrane. Putative guanine nucleotide-exchange factor (GEF) involved in the formation or budding of transport vesicles from the ER. Positive regulator of SAR1 probably through inhibition of the GTPase activation by SEC23. The sequence is that of Putative guanine nucleotide-exchange factor SED4 (SED4) from Candida glabrata (strain ATCC 2001 / BCRC 20586 / JCM 3761 / NBRC 0622 / NRRL Y-65 / CBS 138) (Yeast).